The chain runs to 2318 residues: Neurogenic locus notch homolog protein 3 (2318 aa).

Basic residues predominate over residues 1–14; it reads MGLGARGRRRRRRL. Positions 1–20 are disordered; it reads MGLGARGRRRRRRLMALPPP. Positions 1 to 39 are cleaved as a signal peptide; sequence MGLGARGRRRRRRLMALPPPPPPMRALPLLLLLAGLGAA. EGF-like domains are found at residues 40–78, 79–119, and 120–157; these read APPCLDGSPCANGGRCTHQQPSLEAACLCLPGWVGERCQ, LEDP…PDCS, and QPDPCVSRPCVHGAPCSVGPDGRFACACPPGYQGQSCQ. The Extracellular portion of the chain corresponds to 40–1643; that stretch reads APPCLDGSPC…PLEAPEQSVP (1604 aa). Cystine bridges form between C43-C55, C49-C66, C68-C77, C83-C94, C88-C107, C109-C118, C124-C135, C129-C145, C147-C156, C163-C175, C169-C184, C186-C195, C202-C213, C207-C223, C225-C234, C241-C252, C246-C261, C263-C272, C279-C292, C286-C301, C303-C312, C319-C330, C324-C339, C341-C350, C356-C367, C361-C378, C380-C389, C396-C409, C403-C418, C420-C429, C436-C447, C441-C456, C458-C467, C474-C485, C479-C494, C496-C505, C512-C523, C517-C532, C534-C543, C550-C560, C555-C569, C571-C580, C587-C598, C592-C607, C609-C618, C625-C635, C630-C644, C646-C655, C662-C673, C667-C682, C684-C693, C700-C710, C705-C719, C721-C730, C739-C750, C744-C759, C761-C770, C776-C787, C781-C797, C799-C808, C815-C827, C821-C836, C838-C847, C854-C865, C859-C874, C876-C885, C892-C902, C897-C911, C913-C922, C929-C940, C934-C949, C951-C960, C967-C978, C972-C987, C989-C998, C1005-C1016, C1010-C1023, C1025-C1034, C1041-C1062, C1056-C1071, C1073-C1082, C1089-C1100, C1094-C1109, C1111-C1120, C1127-C1138, C1132-C1147, C1149-C1158, C1165-C1183, C1177-C1192, C1194-C1203, C1210-C1223, C1215-C1233, C1235-C1244, C1251-C1262, C1256-C1276, C1278-C1287, C1294-C1305, C1299-C1314, and C1316-C1325. Residues 159–196 enclose the EGF-like 4; calcium-binding domain; the sequence is DIDECRSGTTCRHGGTCLNTPGSFRCQCPLGYTGLLCE. One can recognise an EGF-like 5 domain in the interval 198-235; that stretch reads PVVPCAPSPCRNGGTCRQSSDVTYDCACLPGFEGQNCE. Residues 237 to 273 form the EGF-like 6; calcium-binding domain; sequence NVDDCPGHRCLNGGTCVDGVNTYNCQCPPEWTGQFCT. The 39-residue stretch at 275 to 313 folds into the EGF-like 7 domain; that stretch reads DVDECQLQPNACHNGGTCFNLLGGHSCVCVNGWTGESCS. The 37-residue stretch at 315-351 folds into the EGF-like 8; calcium-binding domain; the sequence is NIDDCATAVCFHGATCHDRVASFYCACPMGKTGLLCH. Residues 352-390 enclose the EGF-like 9 domain; it reads LDDACVSNPCHEDAICDTNPVSGRAICTCPPGFTGGACD. Residues 392 to 430 form the EGF-like 10; calcium-binding domain; the sequence is DVDECSIGANPCEHLGRCVNTQGSFLCQCGRGYTGPRCE. The 37-residue stretch at 432–468 folds into the EGF-like 11; calcium-binding domain; it reads DVNECLSGPCRNQATCLDRIGQFTCICMAGFTGTYCE. The EGF-like 12; calcium-binding domain occupies 470-506; that stretch reads DIDECQSSPCVNGGVCKDRVNGFSCTCPSGFSGSMCQ. The EGF-like 13; calcium-binding domain maps to 508–544; that stretch reads DVDECASTPCRNGAKCVDQPDGYECRCAEGFEGTLCE. In terms of domain architecture, EGF-like 14; calcium-binding spans 546–581; sequence NVDDCSPDPCHHGRCVDGIASFSCACAPGYTGIRCE. The EGF-like 15; calcium-binding domain maps to 583 to 619; the sequence is QVDECRSQPCRYGGKCLDLVDKYLCRCPPGTTGVNCE. The EGF-like 16; calcium-binding domain occupies 621-656; sequence NIDDCASNPCTFGVCRDGINRYDCVCQPGFTGPLCN. The region spanning 658–694 is the EGF-like 17; calcium-binding domain; it reads EINECASSPCGEGGSCVDGENGFHCLCPPGSLPPLCL. 3 consecutive EGF-like domains span residues 696–731, 735–771, and 772–809; these read ANHPCAHKPCSHGVCHDAPGGFRCVCEPGWSGPRCS, APDACESQPCQAGGTCTSDGIGFRCTCAPGFQGHQCE, and VLSPCTPSLCEHGGHCESDPDRLTVCSCPPGWQGPRCQ. Residues 811 to 848 enclose the EGF-like 21; calcium-binding domain; it reads DVDECAGASPCGPHGTCTNLPGNFRCICHRGYTGPFCD. An EGF-like 22; calcium-binding domain is found at 850–886; sequence DIDDCDPNPCLHGGSCQDGVGSFSCSCLDGFAGPRCA. Residues 888 to 923 enclose the EGF-like 23; calcium-binding domain; that stretch reads DVDECLSSPCGPGTCTDHVASFTCACPPGYGGFHCE. 5 consecutive EGF-like domains span residues 925–961, 963–999, 1001–1035, 1037–1083, and 1085–1121; these read DLPDCSPSSCFNGGTCVDGVSSFSCLCRPGYTGTHCQ, EADPCFSRPCLHGGICNPTHPGFECTCREGFTGSQCQ, PVDWCSQAPCQNGGRCVQTGAYCICPPGWSGRLCD, QSLP…SHCE, and EVDPCTAQPCQHGGTCRGYMGGYVCECPAGYAGDSCE. Positions 1123–1159 constitute an EGF-like 29; calcium-binding domain; sequence NIDECASQPCQNGGSCIDLVARYLCSCPPGTLGVLCE. One can recognise an EGF-like 30; calcium-binding domain in the interval 1161 to 1204; it reads NEDDCDLGPSLDSGVQCLHNGTCVDLVGGFRCNCPPGYTGLHCE. N-linked (GlcNAc...) asparagine glycosylation is present at N1180. EGF-like domains follow at residues 1206–1245, 1247–1288, 1290–1326, and 1336–1374; these read DINECRPGACHAAHTRDCLQDPGGHFRCVCHPGFTGPRCQ, ALSP…LRCE, VARSCRELQCPVGIPCQQTARGPRCACPPGLSGPSCR, and TNASCASAPCLHGGSCLPVQSVPFFRCVCAPGWGGPRCE. N1337 carries N-linked (GlcNAc...) asparagine glycosylation. Cystine bridges form between C1340/C1351, C1345/C1362, C1364/C1373, C1388/C1411, C1393/C1406, C1402/C1418, C1429/C1452, C1434/C1447, C1443/C1459, C1468/C1494, C1476/C1489, and C1485/C1501. 3 LNR repeats span residues 1388–1428, 1429–1466, and 1468–1506; these read CPRA…PWRQ, CEALQCWRLFNNSRCDPACSSPACLYDNFDCYSGGRDR, and CNPVYEKYCADHFADGRCDQGCNTEECGWDGLDCASEVP. N-linked (GlcNAc...) asparagine glycosylation is present at N1439. The helical transmembrane segment at 1644 to 1664 threads the bilayer; sequence LLPLLVAGAVFLLIIFILGVM. The Cytoplasmic segment spans residues 1665–2318; the sequence is VARRKREHST…EVTPKRQVMA (654 aa). 5 ANK repeats span residues 1839-1868, 1872-1902, 1906-1935, 1939-1968, and 1972-2001; these read TGETALHLAARYARADAAKRLLDAGADTNA, SGRTPLHTAVTADAQGVFQILIRNRSTDLDA, DGSTALILAARLAVEGMVEELIASHADVNA, LGKSALHWAAAVNNVEATLALLKNGANKDM, and KEETPLFLAAREGSYEAAKLLLDHLANREI. Disordered stretches follow at residues 2025–2045 and 2058–2126; these read LDQPSGPRSPSGPHGLGPLLC and QSGT…PLEG. Residues 2028 to 2045 are compositionally biased toward low complexity; that stretch reads PSGPRSPSGPHGLGPLLC. Position 2174 is an omega-N-methylarginine (R2174). Residues 2184–2193 are compositionally biased toward low complexity; it reads SFLLPLAPGP. A disordered region spans residues 2184–2318; that stretch reads SFLLPLAPGP…EVTPKRQVMA (135 aa). The interval 2242 to 2261 is PEST-like; it reads HPYLTPSPESPEHWASPSPP. Residues 2262–2282 are compositionally biased toward low complexity; sequence SLSDWSDSTPSPATATNATAS. Residues 2296–2305 are compositionally biased toward polar residues; it reads SLPQSQTQLG.

The protein belongs to the NOTCH family. Interacts with PSMA1. Heterodimer of a C-terminal fragment N(TM) and a N-terminal fragment N(EC) which are probably linked by disulfide bonds. Interacts with MAML1, MAML2 and MAML3 which act as transcriptional coactivators for NOTCH3. Interacts with HIF1AN. Post-translationally, synthesized in the endoplasmic reticulum as an inactive form which is proteolytically cleaved by a furin-like convertase in the trans-Golgi network before it reaches the plasma membrane to yield an active, ligand-accessible form. Cleavage results in a C-terminal fragment N(TM) and a N-terminal fragment N(EC). Following ligand binding, it is cleaved by TNF-alpha converting enzyme (TACE) to yield a membrane-associated intermediate fragment called notch extracellular truncation (NEXT). This fragment is then cleaved by presenilin dependent gamma-secretase to release a notch-derived peptide containing the intracellular domain (NICD) from the membrane. In terms of processing, phosphorylated. Hydroxylated by HIF1AN. Proliferating neuroepithelium.

It is found in the cell membrane. Its subcellular location is the nucleus. In terms of biological role, functions as a receptor for membrane-bound ligands Jagged1, Jagged2 and Delta1 to regulate cell-fate determination. Upon ligand activation through the released notch intracellular domain (NICD) it forms a transcriptional activator complex with RBPJ/RBPSUH and activates genes of the enhancer of split locus. Affects the implementation of differentiation, proliferation and apoptotic programs. May play a role during CNS development. This Mus musculus (Mouse) protein is Neurogenic locus notch homolog protein 3 (Notch3).